Here is a 95-residue protein sequence, read N- to C-terminus: Nickel-cobalt-cadmium resistance protein NccY (95 aa).

The protein to A.eutrophus CnrY.

Component of the NCC cation-efflux system that confers resistance to nickel, cobalt and cadmium. May be involved in the regulation of NCC. The sequence is that of Nickel-cobalt-cadmium resistance protein NccY (nccY) from Alcaligenes xylosoxydans xylosoxydans (Achromobacter xylosoxidans).